Reading from the N-terminus, the 800-residue chain is Serine/threonine-protein kinase KIN4 (800 aa).

The Protein kinase domain occupies Y46–L313. ATP is bound by residues L52–V60 and K80. Residue D175 is the Proton acceptor of the active site. Disordered regions lie at residues L331–V397 and S438–T487. Over residues S348–S358 the composition is skewed to low complexity. A phosphoserine mark is found at S365 and S388. Composition is skewed to polar residues over residues Q380–S395 and G459–K473. The residue at position 521 (S521) is a Phosphoserine. Disordered regions lie at residues E629–S661 and S678–S754. Over residues S678 to N721 the composition is skewed to polar residues. The segment covering P727 to D740 has biased composition (basic and acidic residues). The residue at position 748 (S748) is a Phosphoserine.

The protein belongs to the protein kinase superfamily. Ser/Thr protein kinase family.

The catalysed reaction is L-seryl-[protein] + ATP = O-phospho-L-seryl-[protein] + ADP + H(+). It carries out the reaction L-threonyl-[protein] + ATP = O-phospho-L-threonyl-[protein] + ADP + H(+). This protein is probably a serine/threonine protein kinase. This Saccharomyces cerevisiae (strain ATCC 204508 / S288c) (Baker's yeast) protein is Serine/threonine-protein kinase KIN4 (KIN4).